The chain runs to 247 residues: Probable transcriptional regulatory protein Asuc_1803 (247 aa).

Belongs to the TACO1 family.

The protein localises to the cytoplasm. This Actinobacillus succinogenes (strain ATCC 55618 / DSM 22257 / CCUG 43843 / 130Z) protein is Probable transcriptional regulatory protein Asuc_1803.